Reading from the N-terminus, the 336-residue chain is Large ribosomal subunit protein uL3 (336 aa).

The segment at 1-34 (MVRHHQPRKGSVAFSPRKRAAKETPRIKSWPQND) is disordered.

It belongs to the universal ribosomal protein uL3 family. Part of the 50S ribosomal subunit. Forms a cluster with proteins L14 and L24e.

One of the primary rRNA binding proteins, it binds directly near the 3'-end of the 23S rRNA, where it nucleates assembly of the 50S subunit. The chain is Large ribosomal subunit protein uL3 from Methanobrevibacter smithii (strain ATCC 35061 / DSM 861 / OCM 144 / PS).